The primary structure comprises 257 residues: Zinc uptake system ATP-binding protein ZurA (257 aa).

The ABC transporter domain occupies 5–241 (IEVNNVSYHY…ADRELEILAE (237 aa)). 37–44 (GPNGSGKS) contributes to the ATP binding site.

This sequence belongs to the ABC transporter superfamily.

Its function is as follows. Involved in a zinc uptake transport system. The polypeptide is Zinc uptake system ATP-binding protein ZurA (zurA) (Listeria innocua serovar 6a (strain ATCC BAA-680 / CLIP 11262)).